Here is a 214-residue protein sequence, read N- to C-terminus: MILILLGPPGAGKGTQAKLLAAEYGVPHISTGDMFRDHKARGTELGKTVQAIMDAGGLVTDDITNEMVKDRLSRPDVAKGFILDGYPRTSAQAEYLDGLLASAGRAISRVLSYEVAEEAVVERISGRRSCPKCGAVYHVSANPPRRMGYCDRDDAGLVQRDDDKPENVKKRMAEYAAKTEPLKRFYSARGLLATVEGIGTPEGILAVTKRVLAS.

Residue 10–15 (GAGKGT) participates in ATP binding. The interval 30–59 (STGDMFRDHKARGTELGKTVQAIMDAGGLV) is NMP. AMP-binding positions include threonine 31, arginine 36, 57–59 (GLV), 85–88 (GYPR), and glutamine 92. The tract at residues 126-163 (GRRSCPKCGAVYHVSANPPRRMGYCDRDDAGLVQRDDD) is LID. Arginine 127 is an ATP binding site. Residues cysteine 130 and cysteine 133 each coordinate Zn(2+). ATP is bound at residue 136-137 (VY). Cysteine 150 and aspartate 153 together coordinate Zn(2+). 2 residues coordinate AMP: arginine 160 and arginine 171. ATP is bound at residue glycine 199.

Belongs to the adenylate kinase family. As to quaternary structure, monomer.

The protein localises to the cytoplasm. The catalysed reaction is AMP + ATP = 2 ADP. The protein operates within purine metabolism; AMP biosynthesis via salvage pathway; AMP from ADP: step 1/1. Functionally, catalyzes the reversible transfer of the terminal phosphate group between ATP and AMP. Plays an important role in cellular energy homeostasis and in adenine nucleotide metabolism. This chain is Adenylate kinase, found in Anaeromyxobacter sp. (strain Fw109-5).